A 153-amino-acid polypeptide reads, in one-letter code: UPF0178 protein Sfum_1097 (153 aa).

It belongs to the UPF0178 family.

This is UPF0178 protein Sfum_1097 from Syntrophobacter fumaroxidans (strain DSM 10017 / MPOB).